The sequence spans 527 residues: Bifunctional pantoate ligase/cytidylate kinase (527 aa).

A pantoate--beta-alanine ligase region spans residues 1–277; the sequence is MRQLISPEAL…VGTARLIDNL (277 aa). 27–34 is an ATP binding site; the sequence is MGALHAGH. The active-site Proton donor is the His-34. Residue Gln-58 participates in (R)-pantoate binding. Residue Gln-58 participates in beta-alanine binding. Position 147–150 (147–150) interacts with ATP; that stretch reads GEKD. Gln-153 lines the (R)-pantoate pocket. ATP contacts are provided by residues Val-176 and 184–187; that span reads LSSR. The segment at 278-527 is cytidylate kinase; that stretch reads TLQGRRPIIA…GQTPSPLSLG (250 aa). The interval 507-527 is disordered; sequence GLGDSSPQATPGQTPSPLSLG. The span at 511–527 shows a compositional bias: polar residues; the sequence is SSPQATPGQTPSPLSLG.

This sequence in the N-terminal section; belongs to the pantothenate synthetase family. In the C-terminal section; belongs to the cytidylate kinase family. Type 1 subfamily.

The protein resides in the cytoplasm. It carries out the reaction (R)-pantoate + beta-alanine + ATP = (R)-pantothenate + AMP + diphosphate + H(+). The catalysed reaction is CMP + ATP = CDP + ADP. The enzyme catalyses dCMP + ATP = dCDP + ADP. It participates in cofactor biosynthesis; (R)-pantothenate biosynthesis; (R)-pantothenate from (R)-pantoate and beta-alanine: step 1/1. Catalyzes the condensation of pantoate with beta-alanine in an ATP-dependent reaction via a pantoyl-adenylate intermediate. Its function is as follows. Catalyzes the transfer of a phosphate group from ATP to either CMP or dCMP to form CDP or dCDP and ADP, respectively. The chain is Bifunctional pantoate ligase/cytidylate kinase from Synechococcus elongatus (strain ATCC 33912 / PCC 7942 / FACHB-805) (Anacystis nidulans R2).